The chain runs to 95 residues: Aspartyl/glutamyl-tRNA(Asn/Gln) amidotransferase subunit C (95 aa).

This sequence belongs to the GatC family. In terms of assembly, heterotrimer of A, B and C subunits.

The enzyme catalyses L-glutamyl-tRNA(Gln) + L-glutamine + ATP + H2O = L-glutaminyl-tRNA(Gln) + L-glutamate + ADP + phosphate + H(+). It carries out the reaction L-aspartyl-tRNA(Asn) + L-glutamine + ATP + H2O = L-asparaginyl-tRNA(Asn) + L-glutamate + ADP + phosphate + 2 H(+). In terms of biological role, allows the formation of correctly charged Asn-tRNA(Asn) or Gln-tRNA(Gln) through the transamidation of misacylated Asp-tRNA(Asn) or Glu-tRNA(Gln) in organisms which lack either or both of asparaginyl-tRNA or glutaminyl-tRNA synthetases. The reaction takes place in the presence of glutamine and ATP through an activated phospho-Asp-tRNA(Asn) or phospho-Glu-tRNA(Gln). The sequence is that of Aspartyl/glutamyl-tRNA(Asn/Gln) amidotransferase subunit C from Thermodesulfovibrio yellowstonii (strain ATCC 51303 / DSM 11347 / YP87).